Here is a 252-residue protein sequence, read N- to C-terminus: Phosphosulfolactate synthase (252 aa).

Belongs to the phosphosulfolactate synthase family.

It catalyses the reaction (2R)-O-phospho-3-sulfolactate = phosphoenolpyruvate + sulfite + H(+). Functionally, catalyzes the addition of sulfite to phosphoenolpyruvate (PEP) to yield (2R)-phospho-3-sulfolactate (PSL). Is probably involved in the biosynthesis of L-sulfolactate, which is a major constituent of sporulating cells and mature spores. The protein is Phosphosulfolactate synthase (yitD) of Bacillus subtilis (strain 168).